Reading from the N-terminus, the 81-residue chain is Sec-independent protein translocase protein TatA (81 aa).

A helical transmembrane segment spans residues 1–21 (MGMPSGQELLIILAIVVLLFG). Residues 45–81 (NEDDDTEVKSASTEAPKKVESAEEVASKESSKTPTQA) are disordered. The segment covering 59–75 (APKKVESAEEVASKESS) has biased composition (basic and acidic residues).

Belongs to the TatA/E family. In terms of assembly, the Tat system comprises two distinct complexes: a TatABC complex, containing multiple copies of TatA, TatB and TatC subunits, and a separate TatA complex, containing only TatA subunits. Substrates initially bind to the TatABC complex, which probably triggers association of the separate TatA complex to form the active translocon.

It is found in the cell inner membrane. Its function is as follows. Part of the twin-arginine translocation (Tat) system that transports large folded proteins containing a characteristic twin-arginine motif in their signal peptide across membranes. TatA could form the protein-conducting channel of the Tat system. In Sulfurimonas denitrificans (strain ATCC 33889 / DSM 1251) (Thiomicrospira denitrificans (strain ATCC 33889 / DSM 1251)), this protein is Sec-independent protein translocase protein TatA.